Reading from the N-terminus, the 250-residue chain is Exosome complex component Rrp41 (250 aa).

This sequence belongs to the RNase PH family. Rrp41 subfamily. Component of the archaeal exosome complex. Forms a hexameric ring-like arrangement composed of 3 Rrp41-Rrp42 heterodimers. The hexameric ring associates with a trimer of Rrp4 and/or Csl4 subunits.

It is found in the cytoplasm. Functionally, catalytic component of the exosome, which is a complex involved in RNA degradation. Has 3'-&gt;5' exoribonuclease activity. Can also synthesize heteromeric RNA-tails. The sequence is that of Exosome complex component Rrp41 from Pyrococcus furiosus (strain ATCC 43587 / DSM 3638 / JCM 8422 / Vc1).